An 82-amino-acid polypeptide reads, in one-letter code: UPF0154 protein SPD_1662 (82 aa).

The helical transmembrane segment at leucine 5–valine 25 threads the bilayer.

Belongs to the UPF0154 family.

It is found in the cell membrane. This is UPF0154 protein SPD_1662 from Streptococcus pneumoniae serotype 2 (strain D39 / NCTC 7466).